Consider the following 455-residue polypeptide: 1-deoxy-D-xylulose 5-phosphate reductoisomerase (455 aa).

Residues Thr30, Gly31, Ser32, Ile33, Gln63, and Asn159 each contribute to the NADPH site. Residue Lys160 participates in 1-deoxy-D-xylulose 5-phosphate binding. Residue Glu161 coordinates NADPH. Asp185 provides a ligand contact to Mn(2+). 1-deoxy-D-xylulose 5-phosphate contacts are provided by Ser186 and Glu187. Glu187 is a Mn(2+) binding site. Residues 205 to 214 (YATAKQSIQP) show a composition bias toward polar residues. Residues 205–233 (YATAKQSIQPESVRATDPPSSTTDSPAKT) form a disordered region. Residues Ser246 and His269 each coordinate 1-deoxy-D-xylulose 5-phosphate. Gly275 is an NADPH binding site. Residues Ser282, Asn287, Lys288, and Glu291 each coordinate 1-deoxy-D-xylulose 5-phosphate. Glu291 contacts Mn(2+).

Belongs to the DXR family. Mg(2+) is required as a cofactor. The cofactor is Mn(2+).

The catalysed reaction is 2-C-methyl-D-erythritol 4-phosphate + NADP(+) = 1-deoxy-D-xylulose 5-phosphate + NADPH + H(+). Its pathway is isoprenoid biosynthesis; isopentenyl diphosphate biosynthesis via DXP pathway; isopentenyl diphosphate from 1-deoxy-D-xylulose 5-phosphate: step 1/6. Catalyzes the NADPH-dependent rearrangement and reduction of 1-deoxy-D-xylulose-5-phosphate (DXP) to 2-C-methyl-D-erythritol 4-phosphate (MEP). The chain is 1-deoxy-D-xylulose 5-phosphate reductoisomerase from Rhodopirellula baltica (strain DSM 10527 / NCIMB 13988 / SH1).